A 478-amino-acid chain; its full sequence is UDP-N-acetylmuramate--L-alanine ligase (478 aa).

It belongs to the MurCDEF family.

It is found in the cytoplasm. It carries out the reaction UDP-N-acetyl-alpha-D-muramate + L-alanine + ATP = UDP-N-acetyl-alpha-D-muramoyl-L-alanine + ADP + phosphate + H(+). It participates in cell wall biogenesis; peptidoglycan biosynthesis. Functionally, cell wall formation. The chain is UDP-N-acetylmuramate--L-alanine ligase (murC) from Synechococcus elongatus (strain ATCC 33912 / PCC 7942 / FACHB-805) (Anacystis nidulans R2).